A 123-amino-acid polypeptide reads, in one-letter code: Large ribosomal subunit protein bL12 (123 aa).

Residues 96–123 are disordered; that stretch reads NVKEGVSKEEAEGLKKSLEEAGATVELK. Residues 100–114 are compositionally biased toward basic and acidic residues; the sequence is GVSKEEAEGLKKSLE.

Belongs to the bacterial ribosomal protein bL12 family. Homodimer. Part of the ribosomal stalk of the 50S ribosomal subunit. Forms a multimeric L10(L12)X complex, where L10 forms an elongated spine to which 2 to 4 L12 dimers bind in a sequential fashion. Binds GTP-bound translation factors.

Forms part of the ribosomal stalk which helps the ribosome interact with GTP-bound translation factors. Is thus essential for accurate translation. In Flavobacterium johnsoniae (strain ATCC 17061 / DSM 2064 / JCM 8514 / BCRC 14874 / CCUG 350202 / NBRC 14942 / NCIMB 11054 / UW101) (Cytophaga johnsonae), this protein is Large ribosomal subunit protein bL12.